Consider the following 159-residue polypeptide: 2-C-methyl-D-erythritol 2,4-cyclodiphosphate synthase (159 aa).

Residues Asp-8 and His-10 each contribute to the a divalent metal cation site. Residues 8-10 and 34-35 contribute to the 4-CDP-2-C-methyl-D-erythritol 2-phosphate site; these read DVH and HS. His-42 is a binding site for a divalent metal cation. 4-CDP-2-C-methyl-D-erythritol 2-phosphate contacts are provided by residues 56–58, 61–65, 132–135, Phe-139, and Arg-142; these read DIG, FPDTD, and TTTE.

This sequence belongs to the IspF family. In terms of assembly, homotrimer. It depends on a divalent metal cation as a cofactor.

The enzyme catalyses 4-CDP-2-C-methyl-D-erythritol 2-phosphate = 2-C-methyl-D-erythritol 2,4-cyclic diphosphate + CMP. The protein operates within isoprenoid biosynthesis; isopentenyl diphosphate biosynthesis via DXP pathway; isopentenyl diphosphate from 1-deoxy-D-xylulose 5-phosphate: step 4/6. Functionally, involved in the biosynthesis of isopentenyl diphosphate (IPP) and dimethylallyl diphosphate (DMAPP), two major building blocks of isoprenoid compounds. Catalyzes the conversion of 4-diphosphocytidyl-2-C-methyl-D-erythritol 2-phosphate (CDP-ME2P) to 2-C-methyl-D-erythritol 2,4-cyclodiphosphate (ME-CPP) with a corresponding release of cytidine 5-monophosphate (CMP). In Syntrophobacter fumaroxidans (strain DSM 10017 / MPOB), this protein is 2-C-methyl-D-erythritol 2,4-cyclodiphosphate synthase.